Consider the following 208-residue polypeptide: Small ribosomal subunit protein uS4 (208 aa).

In terms of domain architecture, S4 RNA-binding spans 98 to 161 (QRLDNVVYRM…KTNPQIVRAI (64 aa)).

This sequence belongs to the universal ribosomal protein uS4 family. In terms of assembly, part of the 30S ribosomal subunit. Contacts protein S5. The interaction surface between S4 and S5 is involved in control of translational fidelity.

Its function is as follows. One of the primary rRNA binding proteins, it binds directly to 16S rRNA where it nucleates assembly of the body of the 30S subunit. In terms of biological role, with S5 and S12 plays an important role in translational accuracy. In Campylobacter fetus subsp. fetus (strain 82-40), this protein is Small ribosomal subunit protein uS4.